The sequence spans 206 residues: Small ribosomal subunit protein uS4 (206 aa).

The region spanning 96 to 156 (CRLDNVVYRM…EKSSNQLRIV (61 aa)) is the S4 RNA-binding domain.

It belongs to the universal ribosomal protein uS4 family. In terms of assembly, part of the 30S ribosomal subunit. Contacts protein S5. The interaction surface between S4 and S5 is involved in control of translational fidelity.

In terms of biological role, one of the primary rRNA binding proteins, it binds directly to 16S rRNA where it nucleates assembly of the body of the 30S subunit. Functionally, with S5 and S12 plays an important role in translational accuracy. The sequence is that of Small ribosomal subunit protein uS4 from Pseudomonas putida (strain W619).